The following is a 213-amino-acid chain: Protein big brother (213 aa).

It belongs to the CBF-beta family.

Its subcellular location is the nucleus. Its function is as follows. Regulates the DNA-binding properties of Runt. This chain is Protein big brother (Bgb), found in Drosophila melanogaster (Fruit fly).